Reading from the N-terminus, the 543-residue chain is Phosphoenolpyruvate carboxykinase (ATP) (543 aa).

244 to 251 (GLSGTGKT) lines the ATP pocket.

Belongs to the phosphoenolpyruvate carboxykinase (ATP) family.

The catalysed reaction is oxaloacetate + ATP = phosphoenolpyruvate + ADP + CO2. It functions in the pathway carbohydrate biosynthesis; gluconeogenesis. This Kluyveromyces lactis (strain ATCC 8585 / CBS 2359 / DSM 70799 / NBRC 1267 / NRRL Y-1140 / WM37) (Yeast) protein is Phosphoenolpyruvate carboxykinase (ATP) (PCK1).